The sequence spans 471 residues: tRNA-2-methylthio-N(6)-dimethylallyladenosine synthase (471 aa).

Positions 36-154 constitute an MTTase N-terminal domain; sequence KTYHIITYGC…FPQLLYKAIT (119 aa). The [4Fe-4S] cluster site is built by C45, C81, C115, C191, C195, and C198. Residues 177–407 form the Radical SAM core domain; the sequence is RREGVSAFVN…VKLVEEIALK (231 aa). A TRAM domain is found at 410-471; that stretch reads QQMLGKVCEI…SRHWLYGEVI (62 aa).

This sequence belongs to the methylthiotransferase family. MiaB subfamily. Monomer. The cofactor is [4Fe-4S] cluster.

The protein localises to the cytoplasm. It catalyses the reaction N(6)-dimethylallyladenosine(37) in tRNA + (sulfur carrier)-SH + AH2 + 2 S-adenosyl-L-methionine = 2-methylsulfanyl-N(6)-dimethylallyladenosine(37) in tRNA + (sulfur carrier)-H + 5'-deoxyadenosine + L-methionine + A + S-adenosyl-L-homocysteine + 2 H(+). Its function is as follows. Catalyzes the methylthiolation of N6-(dimethylallyl)adenosine (i(6)A), leading to the formation of 2-methylthio-N6-(dimethylallyl)adenosine (ms(2)i(6)A) at position 37 in tRNAs that read codons beginning with uridine. This chain is tRNA-2-methylthio-N(6)-dimethylallyladenosine synthase, found in Caldicellulosiruptor saccharolyticus (strain ATCC 43494 / DSM 8903 / Tp8T 6331).